The primary structure comprises 580 residues: Acyl-coenzyme A synthetase ACSM4, mitochondrial (580 aa).

The N-terminal 22 residues, 1–22, are a transit peptide targeting the mitochondrion; that stretch reads MKVLLHCQRLRFIWLAKPAGRH. Residues 229-237, 368-373, D455, R470, and K566 each bind ATP; these read TSGTTGSPK and EGYGQT.

This sequence belongs to the ATP-dependent AMP-binding enzyme family. It depends on Mg(2+) as a cofactor. Requires Mn(2+) as cofactor.

Its subcellular location is the mitochondrion. It catalyses the reaction a medium-chain fatty acid + ATP + CoA = a medium-chain fatty acyl-CoA + AMP + diphosphate. The enzyme catalyses hexanoate + ATP + CoA = hexanoyl-CoA + AMP + diphosphate. The catalysed reaction is octanoate + ATP + CoA = octanoyl-CoA + AMP + diphosphate. It carries out the reaction decanoate + ATP + CoA = decanoyl-CoA + AMP + diphosphate. It catalyses the reaction dodecanoate + ATP + CoA = dodecanoyl-CoA + AMP + diphosphate. Functionally, catalyzes the activation of fatty acids by CoA to produce an acyl-CoA, the first step in fatty acid metabolism. Capable of activating medium-chain fatty acids with a preference for C6-12 fatty acids. In Mus musculus (Mouse), this protein is Acyl-coenzyme A synthetase ACSM4, mitochondrial (Acsm4).